Reading from the N-terminus, the 868-residue chain is Programmed cell death 6-interacting protein (868 aa).

Alanine 2 is modified (N-acetylalanine). Positions 3 to 392 (TFISVQLKKT…AQMREATTLA (390 aa)) constitute a BRO1 domain. Residues 176 to 503 (TVDISPDTVG…NFRTVLDKAV (328 aa)) are interaction with CHMP4A, CHMP4B and CHMP4C. Residues 176–868 (TVDISPDTVG…PPQQSYYPQQ (693 aa)) are interaction with EIAV p9. At lysine 215 the chain carries N6-acetyllysine. Residues 418-868 (LTKSRSVIEQ…PPQQSYYPQQ (451 aa)) form an interaction with SDCBP region. Threonine 479 carries the phosphothreonine modification. Serine 481 bears the Phosphoserine mark. The segment at 503-868 (VQADGQVKEC…PPQQSYYPQQ (366 aa)) is self-association. Disordered stretches follow at residues 713–809 (IARE…YPGY) and 832–868 (PYPP…YPQQ). The interaction with TSG101 stretch occupies residues 717–720 (PSAP). Serine 730 bears the Phosphoserine mark. Residues 737 to 763 (PTPPTPAPRTMPPTKPQPPARPPPPVL) are compositionally biased toward pro residues. 2 positions are modified to phosphothreonine: threonine 738 and threonine 741. The residue at position 745 (arginine 745) is an Omega-N-methylarginine. Residues 778–791 (GAGTAAPAPSQTPG) are compositionally biased toward low complexity. 2 stretches are compositionally biased toward pro residues: residues 792–807 (SAPP…PTYP) and 844–860 (APYP…PQPP). An interaction with CEP55 region spans residues 801-806 (PPYPTY). The interval 864–868 (YYPQQ) is essential to promote virus budding.

Self-associates. Interacts with SH3KBP1/CIN85. Interacts with PDCD6 in a calcium -dependent manner. Interacts with TSG101 in a calcium-dependent manner; PDCD6IP homooligomerization may be required for TSG101-binding. Interacts with SGSM3. Directly interacts with CHMP4A, CHMP4B and CHMP4C. Directly interacts with CEP55 in a 1:2 stoechiometry. The interaction with CEP55 is required for PDCD6IP targeting to the midbody. May interact with PDGFRB. Interacts with SH3GL1 and SH3GL2/endophilin-1. Forms a complex with SDCBP and SDC2. Found in a complex with F-actin, TJP1/ZO-1 and PARD3. Interacts with CD2AP. Interacts with ARRDC1. Interacts (via BRO1 domain) with the ATG12-ATG3 conjugate; this interaction is bridged by ATG12 and promotes multiple PDCD6IP-mediated functions such as endolysosomal trafficking, macroautophagy and exosome biogenesis. As to quaternary structure, (Microbial infection) Interacts with HIV-1 p6. Interacts with HIV-1 p9. In terms of assembly, (Microbial infection) Interacts with EIAV p9. (Microbial infection) Interacts with Murine leukemia virus Gag polyprotein (via LYPX(n)L motif). As to quaternary structure, (Microbial infection) Interacts with ebola virus protein VP40 (via YPx(n)L/I motif). May be phosphorylated on tyrosine residues by activated PDGFRB.

The protein localises to the cytoplasm. It localises to the cytosol. Its subcellular location is the melanosome. The protein resides in the cytoskeleton. It is found in the microtubule organizing center. The protein localises to the centrosome. It localises to the secreted. Its subcellular location is the extracellular exosome. The protein resides in the cell junction. It is found in the tight junction. The protein localises to the midbody. It localises to the midbody ring. Its function is as follows. Multifunctional protein involved in endocytosis, multivesicular body biogenesis, membrane repair, cytokinesis, apoptosis and maintenance of tight junction integrity. Class E VPS protein involved in concentration and sorting of cargo proteins of the multivesicular body (MVB) for incorporation into intralumenal vesicles (ILVs) that are generated by invagination and scission from the limiting membrane of the endosome. Binds to the phospholipid lysobisphosphatidic acid (LBPA) which is abundant in MVBs internal membranes. The MVB pathway requires the sequential function of ESCRT-O, -I,-II and -III complexes. The ESCRT machinery also functions in topologically equivalent membrane fission events, such as the terminal stages of cytokinesis. Adapter for a subset of ESCRT-III proteins, such as CHMP4, to function at distinct membranes. Required for completion of cytokinesis. May play a role in the regulation of both apoptosis and cell proliferation. Regulates exosome biogenesis in concert with SDC1/4 and SDCBP. By interacting with F-actin, PARD3 and TJP1 secures the proper assembly and positioning of actomyosin-tight junction complex at the apical sides of adjacent epithelial cells that defines a spatial membrane domain essential for the maintenance of epithelial cell polarity and barrier. (Microbial infection) Involved in HIV-1 virus budding. Can replace TSG101 it its role of supporting HIV-1 release; this function requires the interaction with CHMP4B. The ESCRT machinery also functions in topologically equivalent membrane fission events, such as enveloped virus budding (HIV-1 and other lentiviruses). The chain is Programmed cell death 6-interacting protein from Homo sapiens (Human).